The primary structure comprises 412 residues: Gamma-glutamyl phosphate reductase (412 aa).

Belongs to the gamma-glutamyl phosphate reductase family.

It localises to the cytoplasm. It carries out the reaction L-glutamate 5-semialdehyde + phosphate + NADP(+) = L-glutamyl 5-phosphate + NADPH + H(+). Its pathway is amino-acid biosynthesis; L-proline biosynthesis; L-glutamate 5-semialdehyde from L-glutamate: step 2/2. Its function is as follows. Catalyzes the NADPH-dependent reduction of L-glutamate 5-phosphate into L-glutamate 5-semialdehyde and phosphate. The product spontaneously undergoes cyclization to form 1-pyrroline-5-carboxylate. The sequence is that of Gamma-glutamyl phosphate reductase from Lactiplantibacillus plantarum (strain ATCC BAA-793 / NCIMB 8826 / WCFS1) (Lactobacillus plantarum).